The chain runs to 461 residues: Cysteine--tRNA ligase (461 aa).

Cysteine 28 lines the Zn(2+) pocket. The 'HIGH' region signature appears at 30–40; sequence VTIYDLCHIGH. Residues cysteine 209, histidine 234, and glutamate 238 each coordinate Zn(2+). The short motif at 266 to 270 is the 'KMSKS' region element; the sequence is KMSKS. ATP is bound at residue lysine 269.

Belongs to the class-I aminoacyl-tRNA synthetase family. In terms of assembly, monomer. The cofactor is Zn(2+).

It is found in the cytoplasm. The enzyme catalyses tRNA(Cys) + L-cysteine + ATP = L-cysteinyl-tRNA(Cys) + AMP + diphosphate. In Vibrio atlanticus (strain LGP32) (Vibrio splendidus (strain Mel32)), this protein is Cysteine--tRNA ligase.